We begin with the raw amino-acid sequence, 891 residues long: Alanine--tRNA ligase (891 aa).

His-564, His-568, Cys-681, and His-685 together coordinate Zn(2+).

It belongs to the class-II aminoacyl-tRNA synthetase family. Zn(2+) is required as a cofactor.

The protein resides in the cytoplasm. The enzyme catalyses tRNA(Ala) + L-alanine + ATP = L-alanyl-tRNA(Ala) + AMP + diphosphate. Catalyzes the attachment of alanine to tRNA(Ala) in a two-step reaction: alanine is first activated by ATP to form Ala-AMP and then transferred to the acceptor end of tRNA(Ala). Also edits incorrectly charged Ser-tRNA(Ala) and Gly-tRNA(Ala) via its editing domain. This chain is Alanine--tRNA ligase, found in Methylorubrum extorquens (strain PA1) (Methylobacterium extorquens).